The sequence spans 467 residues: Cysteine--tRNA ligase (467 aa).

Position 30 (Cys-30) interacts with Zn(2+). Positions 32-42 (PTVYDDSHLGH) match the 'HIGH' region motif. Zn(2+) contacts are provided by Cys-209, His-239, and Glu-243. Residues 271–275 (KMSKS) carry the 'KMSKS' region motif. Lys-274 is an ATP binding site.

Belongs to the class-I aminoacyl-tRNA synthetase family. In terms of assembly, monomer. It depends on Zn(2+) as a cofactor.

Its subcellular location is the cytoplasm. It carries out the reaction tRNA(Cys) + L-cysteine + ATP = L-cysteinyl-tRNA(Cys) + AMP + diphosphate. The polypeptide is Cysteine--tRNA ligase (Aliarcobacter butzleri (strain RM4018) (Arcobacter butzleri)).